The primary structure comprises 249 residues: Probable transcriptional regulatory protein Psyc_0938 (249 aa).

Belongs to the TACO1 family.

Its subcellular location is the cytoplasm. This chain is Probable transcriptional regulatory protein Psyc_0938, found in Psychrobacter arcticus (strain DSM 17307 / VKM B-2377 / 273-4).